A 253-amino-acid chain; its full sequence is Dihydroanticapsin 7-dehydrogenase (253 aa).

Residue 9–31 (LITGGASGIGYAAVQAFLGQQAN) participates in NAD(+) binding. Position 139 (Ser139) interacts with substrate. Catalysis depends on Tyr152, which acts as the Proton acceptor.

It belongs to the short-chain dehydrogenases/reductases (SDR) family.

It catalyses the reaction L-dihydroanticapsin + NAD(+) = L-anticapsin + NADH + H(+). Its pathway is antibiotic biosynthesis; bacilysin biosynthesis. Part of the bacABCDEFG operon responsible for the biosynthesis of bacilysin, an irreversible inactivator of the glutaminase domain of glucosamine synthetase. Catalyzes the dehydrogenation of the C7-hydroxyl group in the 4S-tetrahydrotyrosine (4S-H4Tyr) to yield anticapsin (epoxycyclohexanonyl-Ala). It is not able to oxidize the 4R-H4Tyr diastereomer and the dihydrobacilysin dipeptide (L-Ala-4S-H4Tyr dipeptide). The sequence is that of Dihydroanticapsin 7-dehydrogenase from Bacillus subtilis (strain 168).